The sequence spans 714 residues: Centromere/kinetochore protein zw10 (714 aa).

This sequence belongs to the ZW10 family.

Its subcellular location is the cytoplasm. The protein resides in the nucleus. It localises to the chromosome. The protein localises to the centromere. It is found in the kinetochore. Functionally, required for accurate chromosome segregation. The chain is Centromere/kinetochore protein zw10 (mit(1)15) from Drosophila grimshawi (Hawaiian fruit fly).